The following is a 206-amino-acid chain: High frequency lysogenization protein HflD homolog (206 aa).

This sequence belongs to the HflD family.

The protein localises to the cytoplasm. It localises to the cell inner membrane. This is High frequency lysogenization protein HflD homolog from Idiomarina loihiensis (strain ATCC BAA-735 / DSM 15497 / L2-TR).